We begin with the raw amino-acid sequence, 486 residues long: H2.0-like homeobox protein (486 aa).

2 disordered regions span residues 83-173 (ASFQ…SSKD) and 330-486 (KWRH…LGGL). Positions 125–135 (QQQQQQQQPQQ) are enriched in low complexity. Positions 276 to 335 (RSWSRAVFSNLQRKGLEKRFEIQKYVTKPDRKQLAAMLGLTDAQVKVWFQNRRMKWRHSK) form a DNA-binding region, homeobox. 2 stretches are compositionally biased toward basic and acidic residues: residues 334–349 (SKEAQAQKDKDKEAGE) and 363–372 (EERSPSRSEG). The span at 373–383 (EAESESSDPES) shows a compositional bias: acidic residues. The segment covering 390–401 (DTERTEGTERSL) has biased composition (basic and acidic residues). Over residues 409 to 420 (ASAAGALLAASS) the composition is skewed to low complexity. Positions 421 to 440 (GGSGGSGGGGGGGFNFGGLS) are enriched in gly residues. The span at 441–474 (SGSTTSAGSSGSHSSGGASELLPAPQPSLSSAPK) shows a compositional bias: low complexity. Over residues 475-486 (SPEPVPAPLGGL) the composition is skewed to pro residues.

This sequence belongs to the H2.0 homeobox family.

The protein resides in the nucleus. Transcription factor required for TBX21/T-bet-dependent maturation of Th1 cells as well as maintenance of Th1-specific gene expression. Involved in embryogenesis and hematopoiesis. In Bos taurus (Bovine), this protein is H2.0-like homeobox protein (HLX).